The following is a 367-amino-acid chain: Peptide chain release factor 2 (367 aa).

Gln254 is modified (N5-methylglutamine).

The protein belongs to the prokaryotic/mitochondrial release factor family. Post-translationally, methylated by PrmC. Methylation increases the termination efficiency of RF2.

The protein resides in the cytoplasm. Its function is as follows. Peptide chain release factor 2 directs the termination of translation in response to the peptide chain termination codons UGA and UAA. The sequence is that of Peptide chain release factor 2 from Leptospira interrogans serogroup Icterohaemorrhagiae serovar Lai (strain 56601).